Consider the following 294-residue polypeptide: Protoheme IX farnesyltransferase (294 aa).

The next 9 helical transmembrane spans lie at 24-44 (VVLLMLLTVIVGMYLAAPGWV), 48-68 (LIAFTLLGIGLCAGSAAAINH), 96-116 (ALWFAVIIGLMGLSLLILFVN), 118-138 (LTALLTFVTLIGYAGVYTGYL), 145-165 (NIVIGGLAGAAPPLLGWTAVT), 172-192 (ALLLVLIIFTWTPPHFWALAI), 224-244 (VLLLVVSLLPFVVSMSGWIYL), 245-265 (LGALVLGIRFLVWAHKLYFTD), and 268-288 (VVAMQTFRFSILYLMLLFVFL).

The protein belongs to the UbiA prenyltransferase family. Protoheme IX farnesyltransferase subfamily.

It localises to the cell inner membrane. The catalysed reaction is heme b + (2E,6E)-farnesyl diphosphate + H2O = Fe(II)-heme o + diphosphate. The protein operates within porphyrin-containing compound metabolism; heme O biosynthesis; heme O from protoheme: step 1/1. In terms of biological role, converts heme B (protoheme IX) to heme O by substitution of the vinyl group on carbon 2 of heme B porphyrin ring with a hydroxyethyl farnesyl side group. This Legionella pneumophila (strain Corby) protein is Protoheme IX farnesyltransferase.